Reading from the N-terminus, the 141-residue chain is Glutathione transferase FosA (141 aa).

A VOC domain is found at 4–117 (SLNHLTLAVS…DGHKLELHVG (114 aa)). Residues histidine 7, histidine 67, and glutamate 113 each contribute to the Mn(2+) site.

This sequence belongs to the fosfomycin resistance protein family. In terms of assembly, homodimer. Mn(2+) is required as a cofactor.

It localises to the cytoplasm. The catalysed reaction is RX + glutathione = an S-substituted glutathione + a halide anion + H(+). Requires the monovalent cation K(+) for optimal activity. In terms of biological role, metalloglutathione transferase which confers resistance to fosfomycin by catalyzing the addition of glutathione to fosfomycin. The protein is Glutathione transferase FosA (fosA) of Serratia marcescens.